Consider the following 315-residue polypeptide: Putative HTH-type transcriptional regulatory protein PF1851 (315 aa).

The HTH cro/C1-type domain maps to 131–189 (LRELREKYGYSTTELAEMLGVSRKSVQRYEKGEGMVSIDVAIRLEEIFDEPLVKPIDIF). The H-T-H motif DNA-binding region spans 142–161 (TTELAEMLGVSRKSVQRYEK).

The sequence is that of Putative HTH-type transcriptional regulatory protein PF1851 from Pyrococcus furiosus (strain ATCC 43587 / DSM 3638 / JCM 8422 / Vc1).